The following is a 432-amino-acid chain: 23S rRNA (uracil(1939)-C(5))-methyltransferase RlmD (432 aa).

In terms of domain architecture, TRAM spans 10–68 (RVTTREIITVTTDGLDAFGQGVARHHGKALFIAGLLPGERAEVVLSEDKKQFARGDVKK). Residues cysteine 81, cysteine 87, cysteine 90, and cysteine 162 each contribute to the [4Fe-4S] cluster site. Residues glutamine 265, phenylalanine 294, asparagine 299, glutamate 315, asparagine 342, and aspartate 363 each coordinate S-adenosyl-L-methionine. The Nucleophile role is filled by cysteine 389.

It belongs to the class I-like SAM-binding methyltransferase superfamily. RNA M5U methyltransferase family. RlmD subfamily.

The enzyme catalyses uridine(1939) in 23S rRNA + S-adenosyl-L-methionine = 5-methyluridine(1939) in 23S rRNA + S-adenosyl-L-homocysteine + H(+). In terms of biological role, catalyzes the formation of 5-methyl-uridine at position 1939 (m5U1939) in 23S rRNA. The protein is 23S rRNA (uracil(1939)-C(5))-methyltransferase RlmD of Cronobacter sakazakii (strain ATCC BAA-894) (Enterobacter sakazakii).